Here is a 269-residue protein sequence, read N- to C-terminus: MLRTPKAASDPMTLTQQEMRELPLFRRLRHAVGKAVADFAMIREGDRIAVGVSGGKDSYTLLLLLEELRRRAPIDFQLVAVIIDSGYPGYRGDIVRDYVTSLGIPCHLETTTHYEIITEKRRPGSSYCSICARLKRGALYGLADSLGCNKLALGHHGDDFIETLLLNQFFVGSLKAMSANMLADNGRTTVIRPLVYASEEEIVDFMGQVGLPVVSCNCPVSDSTDLKRRRMKELLKELEQEIPHIRSSMLKALSNVHPRHLLDQQLQGL.

The PP-loop motif motif lies at 53-58 (SGGKDS). [4Fe-4S] cluster is bound by residues cysteine 128, cysteine 131, and cysteine 218.

The protein belongs to the TtcA family. As to quaternary structure, homodimer. The cofactor is Mg(2+). It depends on [4Fe-4S] cluster as a cofactor.

The protein resides in the cytoplasm. The catalysed reaction is cytidine(32) in tRNA + S-sulfanyl-L-cysteinyl-[cysteine desulfurase] + AH2 + ATP = 2-thiocytidine(32) in tRNA + L-cysteinyl-[cysteine desulfurase] + A + AMP + diphosphate + H(+). It functions in the pathway tRNA modification. Its function is as follows. Catalyzes the ATP-dependent 2-thiolation of cytidine in position 32 of tRNA, to form 2-thiocytidine (s(2)C32). The sulfur atoms are provided by the cysteine/cysteine desulfurase (IscS) system. The protein is tRNA-cytidine(32) 2-sulfurtransferase of Pelobacter propionicus (strain DSM 2379 / NBRC 103807 / OttBd1).